Here is a 276-residue protein sequence, read N- to C-terminus: ESX-2 secretion-associated protein EspG2 (276 aa).

This sequence belongs to the EspG family. As to quaternary structure, interacts specifically with ESX-2-dependent PE/PPE proteins.

It localises to the cytoplasm. Specific chaperone for cognate PE/PPE proteins. Plays an important role in preventing aggregation of PE/PPE dimers. The polypeptide is ESX-2 secretion-associated protein EspG2 (Mycobacterium tuberculosis (strain CDC 1551 / Oshkosh)).